The sequence spans 369 residues: MSYYYNIFTDFISCISSGAVLLIKIMAVIISVMVSVAYLVYMERKVIGAIQLRQGPNVVGPFGLLQPFADAVKLIIKEHIIPFKSNKICFLIAPIITFTLALLGWAVIPFGADVIVNNGHEVIIPNVIANINIGVLYILAISSLGVYGIIIAGWSSNSNYAFLGAIRSASQMISYEVSIGLTIVTVLLATGSLKLGEIVVARHNMPYWIDLLLLPMACVFFISSLAETNRHPFDLPEAESELVSGYNVEYSSMPFALFFLGEYANMILINAMAVIFFFGGWYPPLNISFLYVIPGIIWFVLKIIVLLFCFIWIRATIPRYRYDQLMRLGWKVFLPISLLWVVLVSGVLLYTDSLPRNAYGIQYVHDLDQ.

Transmembrane regions (helical) follow at residues 20-40 (VLLI…AYLV), 88-108 (ICFL…WAVI), 133-153 (IGVL…IIAG), 179-199 (IGLT…GEIV), 205-225 (MPYW…ISSL), 267-287 (ILIN…PLNI), 293-313 (IPGI…FIWI), and 328-348 (LGWK…SGVL).

It belongs to the complex I subunit 1 family. NDH-1 is composed of 14 different subunits. Subunits NuoA, H, J, K, L, M, N constitute the membrane sector of the complex.

The protein resides in the cell inner membrane. It carries out the reaction a quinone + NADH + 5 H(+)(in) = a quinol + NAD(+) + 4 H(+)(out). Its function is as follows. NDH-1 shuttles electrons from NADH, via FMN and iron-sulfur (Fe-S) centers, to quinones in the respiratory chain. The immediate electron acceptor for the enzyme in this species is believed to be ubiquinone. Couples the redox reaction to proton translocation (for every two electrons transferred, four hydrogen ions are translocated across the cytoplasmic membrane), and thus conserves the redox energy in a proton gradient. This subunit may bind ubiquinone. The protein is NADH-quinone oxidoreductase subunit H of Ehrlichia canis (strain Jake).